A 200-amino-acid chain; its full sequence is Recoverin (200 aa).

Gly2 carries the N-myristoyl glycine lipid modification. 4 consecutive EF-hand domains span residues Glu25 to Thr60, Asp61 to Gly96, Lys97 to Met132, and Thr147 to Ile182. Position 39 is a cysteine sulfenic acid (-SOH) (Cys39). The Ca(2+) site is built by Asp74, Asn76, Asp78, Thr80, Glu85, Asp110, Asp112, Asn114, Thr116, and Glu121. Residues Glu189–Lys192 are interaction with GRK1.

This sequence belongs to the recoverin family. As to quaternary structure, homodimer; disulfide-linked. Homodimerization is caused by prolonged intense illumination. May form a complex composed of RHO, GRK1 and RCVRN in a Ca(2+)-dependent manner; RCVRN prevents the interaction between GRK1 and RHO. Interacts (via C-terminus) with GRK1 (via N-terminus); the interaction is Ca(2+)-dependent. The N-terminal glycine is linked to one of four different types of acyl groups. The most abundant is myristoleate (14:1), but 14:0, 14:2, and 12:0 acyl residues are also present. The Ca(2+) induced exposure of the myristoyl group, known as the calcium-myristoyl switch, promotes RCVRN binding to the photoreceptor cell membranes only when intracellular Ca(2+) concentration is high. In terms of processing, oxidation on Cys-39 occurs in response to prolonged intense illumination and results in the formation of disulfide homodimers, and to a lesser extent disulfide-linked heterodimers. Retina and pineal gland.

The protein localises to the photoreceptor inner segment. It is found in the cell projection. Its subcellular location is the cilium. The protein resides in the photoreceptor outer segment. It localises to the photoreceptor outer segment membrane. The protein localises to the perikaryon. Acts as a calcium sensor and regulates phototransduction of cone and rod photoreceptor cells. Modulates light sensitivity of cone photoreceptor in dark and dim conditions. In response to high Ca(2+) levels induced by low light levels, prolongs RHO/rhodopsin activation in rod photoreceptor cells by binding to and inhibiting GRK1-mediated phosphorylation of RHO/rhodopsin. Plays a role in scotopic vision/enhances vision in dim light by enhancing signal transfer between rod photoreceptors and rod bipolar cells. Improves rod photoreceptor sensitivity in dim light and mediates response of rod photoreceptors to facilitate detection of change and motion in bright light. The chain is Recoverin (RCVRN) from Homo sapiens (Human).